A 474-amino-acid polypeptide reads, in one-letter code: Cobyric acid synthase (474 aa).

A GATase cobBQ-type domain is found at 251-431; it reads TGFVAIPRLP…LHGLLENSAY (181 aa). Cysteine 328 serves as the catalytic Nucleophile. The active site involves histidine 423.

This sequence belongs to the CobB/CobQ family. CobQ subfamily.

The protein operates within cofactor biosynthesis; adenosylcobalamin biosynthesis. Functionally, catalyzes amidations at positions B, D, E, and G on adenosylcobyrinic A,C-diamide. NH(2) groups are provided by glutamine, and one molecule of ATP is hydrogenolyzed for each amidation. This Deinococcus radiodurans (strain ATCC 13939 / DSM 20539 / JCM 16871 / CCUG 27074 / LMG 4051 / NBRC 15346 / NCIMB 9279 / VKM B-1422 / R1) protein is Cobyric acid synthase.